Consider the following 577-residue polypeptide: Beta-fructofuranosidase, insoluble isoenzyme 1 (577 aa).

Positions 1–22 are cleaved as a signal peptide; that stretch reads MGTRLLALAPWLLLLLLQLAGA. Aspartate 63 is a catalytic residue. Residues asparagine 158, asparagine 183, and asparagine 333 are each glycosylated (N-linked (GlcNAc...) asparagine).

The protein belongs to the glycosyl hydrolase 32 family. In terms of tissue distribution, expressed in roots, leaves and flowers. Weakly expressed in seeds.

The protein localises to the secreted. It localises to the extracellular space. Its subcellular location is the apoplast. It is found in the cell wall. It catalyses the reaction Hydrolysis of terminal non-reducing beta-D-fructofuranoside residues in beta-D-fructofuranosides.. Functionally, may play a role in sucrose partitioning during seed development and in stress response. The sequence is that of Beta-fructofuranosidase, insoluble isoenzyme 1 (CIN1) from Oryza sativa subsp. japonica (Rice).